Reading from the N-terminus, the 1057-residue chain is Carbamoyl phosphate synthase large chain (1057 aa).

Residues 1-401 (MPKRDDIQTI…SLLKAIRSLE (401 aa)) are carboxyphosphate synthetic domain. ATP contacts are provided by R129, R169, G175, G176, K208, I210, E215, G241, I242, H243, Q284, and E298. One can recognise an ATP-grasp 1 domain in the interval 133–327 (RSLMNDLNVP…IAKLAAKIAV (195 aa)). Q284, E298, and N300 together coordinate Mg(2+). Residues Q284, E298, and N300 each coordinate Mn(2+). The interval 402–546 (YGVHHLGLPN…YGTYETENES (145 aa)) is oligomerization domain. A carbamoyl phosphate synthetic domain region spans residues 547-929 (IVTDKEKILV…ALYKGLTGSG (383 aa)). The region spanning 671-861 (EALLHTIDVP…MAQLAMQAIM (191 aa)) is the ATP-grasp 2 domain. R707, R746, L748, E752, G777, V778, H779, S780, Q820, and E832 together coordinate ATP. Mg(2+)-binding residues include Q820, E832, and N834. Q820, E832, and N834 together coordinate Mn(2+). An MGS-like domain is found at 930–1057 (VEVKDHGTVL…ESMTFSMRTM (128 aa)). The interval 930-1057 (VEVKDHGTVL…ESMTFSMRTM (128 aa)) is allosteric domain.

It belongs to the CarB family. In terms of assembly, composed of two chains; the small (or glutamine) chain promotes the hydrolysis of glutamine to ammonia, which is used by the large (or ammonia) chain to synthesize carbamoyl phosphate. Tetramer of heterodimers (alpha,beta)4. Mg(2+) is required as a cofactor. It depends on Mn(2+) as a cofactor.

It carries out the reaction hydrogencarbonate + L-glutamine + 2 ATP + H2O = carbamoyl phosphate + L-glutamate + 2 ADP + phosphate + 2 H(+). The catalysed reaction is hydrogencarbonate + NH4(+) + 2 ATP = carbamoyl phosphate + 2 ADP + phosphate + 2 H(+). It participates in amino-acid biosynthesis; L-arginine biosynthesis; carbamoyl phosphate from bicarbonate: step 1/1. It functions in the pathway pyrimidine metabolism; UMP biosynthesis via de novo pathway; (S)-dihydroorotate from bicarbonate: step 1/3. Functionally, large subunit of the glutamine-dependent carbamoyl phosphate synthetase (CPSase). CPSase catalyzes the formation of carbamoyl phosphate from the ammonia moiety of glutamine, carbonate, and phosphate donated by ATP, constituting the first step of 2 biosynthetic pathways, one leading to arginine and/or urea and the other to pyrimidine nucleotides. The large subunit (synthetase) binds the substrates ammonia (free or transferred from glutamine from the small subunit), hydrogencarbonate and ATP and carries out an ATP-coupled ligase reaction, activating hydrogencarbonate by forming carboxy phosphate which reacts with ammonia to form carbamoyl phosphate. This Staphylococcus haemolyticus (strain JCSC1435) protein is Carbamoyl phosphate synthase large chain.